The following is a 46-amino-acid chain: uncharacterized protein (46 aa).

It localises to the mitochondrion. This is an uncharacterized protein from Saccharomyces cerevisiae (strain ATCC 204508 / S288c) (Baker's yeast).